The following is a 199-amino-acid chain: Prolactin (199 aa).

Cysteine 4 and cysteine 11 are disulfide-bonded. Serine 26, serine 34, and serine 90 each carry phosphoserine. 2 disulfide bridges follow: cysteine 58–cysteine 174 and cysteine 191–cysteine 199.

This sequence belongs to the somatotropin/prolactin family. Interacts with PRLR.

The protein localises to the secreted. Functionally, prolactin acts primarily on the mammary gland by promoting lactation. The protein is Prolactin (PRL) of Balaenoptera borealis (Sei whale).